Consider the following 469-residue polypeptide: Tubulin gamma-2 chain (469 aa).

Residue 142–148 (AGGTGSG) participates in GTP binding.

This sequence belongs to the tubulin family.

The protein localises to the cytoplasm. It is found in the cytoskeleton. The protein resides in the microtubule organizing center. Its function is as follows. Tubulin is the major constituent of microtubules. The gamma chain is found at microtubule organizing centers (MTOC) such as the spindle poles, suggesting that it is involved in the minus-end nucleation of microtubule assembly. The polypeptide is Tubulin gamma-2 chain (TUBG2) (Oryza sativa subsp. japonica (Rice)).